The primary structure comprises 1347 residues: Spermatogenesis-associated protein 31A3 (1347 aa).

The chain crosses the membrane as a helical span at residues Pro-23 to Leu-43. Disordered stretches follow at residues Pro-55 to Cys-87, His-108 to Met-142, Ser-154 to Ile-235, Glu-373 to Lys-397, Gln-627 to Lys-658, Arg-900 to Val-955, Val-1084 to Ser-1161, and Lys-1313 to His-1335. Residues Gly-60 to Arg-82 show a composition bias toward basic residues. A compositionally biased stretch (polar residues) spans Leu-165–Val-178. The span at Pro-198 to Pro-211 shows a compositional bias: pro residues. 2 stretches are compositionally biased toward polar residues: residues Gln-627–Glu-651 and Leu-927–Ala-948. 2 stretches are compositionally biased toward basic and acidic residues: residues His-1108 to Gly-1127 and Arg-1137 to Glu-1146.

This sequence belongs to the SPATA31 family.

It is found in the membrane. Its function is as follows. May play a role in spermatogenesis. This is Spermatogenesis-associated protein 31A3 (SPATA31A3) from Homo sapiens (Human).